The sequence spans 457 residues: Bifunctional protein GlmU (457 aa).

The pyrophosphorylase stretch occupies residues 1–228; the sequence is MEGLVTLILA…SEEITGVNSR (228 aa). UDP-N-acetyl-alpha-D-glucosamine contacts are provided by residues 9–12, lysine 23, glutamine 73, and 78–79; these read LAAG and GT. A Mg(2+)-binding site is contributed by aspartate 102. Residues glycine 139, glutamate 154, asparagine 169, and asparagine 226 each contribute to the UDP-N-acetyl-alpha-D-glucosamine site. Asparagine 226 lines the Mg(2+) pocket. The interval 229–249 is linker; the sequence is VQLFEAEKIMRKRINYRHMEN. The segment at 250–457 is N-acetyltransferase; it reads GVTIVDPDTT…VQERIKKGRL (208 aa). UDP-N-acetyl-alpha-D-glucosamine contacts are provided by arginine 331 and lysine 349. Histidine 361 (proton acceptor) is an active-site residue. Positions 364 and 375 each coordinate UDP-N-acetyl-alpha-D-glucosamine. Acetyl-CoA is bound by residues 384 to 385, alanine 421, and arginine 438; that span reads NY.

In the N-terminal section; belongs to the N-acetylglucosamine-1-phosphate uridyltransferase family. It in the C-terminal section; belongs to the transferase hexapeptide repeat family. Homotrimer. The cofactor is Mg(2+).

It localises to the cytoplasm. It catalyses the reaction alpha-D-glucosamine 1-phosphate + acetyl-CoA = N-acetyl-alpha-D-glucosamine 1-phosphate + CoA + H(+). The catalysed reaction is N-acetyl-alpha-D-glucosamine 1-phosphate + UTP + H(+) = UDP-N-acetyl-alpha-D-glucosamine + diphosphate. It functions in the pathway nucleotide-sugar biosynthesis; UDP-N-acetyl-alpha-D-glucosamine biosynthesis; N-acetyl-alpha-D-glucosamine 1-phosphate from alpha-D-glucosamine 6-phosphate (route II): step 2/2. Its pathway is nucleotide-sugar biosynthesis; UDP-N-acetyl-alpha-D-glucosamine biosynthesis; UDP-N-acetyl-alpha-D-glucosamine from N-acetyl-alpha-D-glucosamine 1-phosphate: step 1/1. The protein operates within bacterial outer membrane biogenesis; LPS lipid A biosynthesis. Catalyzes the last two sequential reactions in the de novo biosynthetic pathway for UDP-N-acetylglucosamine (UDP-GlcNAc). The C-terminal domain catalyzes the transfer of acetyl group from acetyl coenzyme A to glucosamine-1-phosphate (GlcN-1-P) to produce N-acetylglucosamine-1-phosphate (GlcNAc-1-P), which is converted into UDP-GlcNAc by the transfer of uridine 5-monophosphate (from uridine 5-triphosphate), a reaction catalyzed by the N-terminal domain. The chain is Bifunctional protein GlmU from Thermoanaerobacter pseudethanolicus (strain ATCC 33223 / 39E) (Clostridium thermohydrosulfuricum).